Reading from the N-terminus, the 259-residue chain is Ribonuclease PH (259 aa).

Residues Arg-88 and 126–128 each bind phosphate; that span reads GTR.

This sequence belongs to the RNase PH family. Homohexameric ring arranged as a trimer of dimers.

The enzyme catalyses tRNA(n+1) + phosphate = tRNA(n) + a ribonucleoside 5'-diphosphate. In terms of biological role, phosphorolytic 3'-5' exoribonuclease that plays an important role in tRNA 3'-end maturation. Removes nucleotide residues following the 3'-CCA terminus of tRNAs; can also add nucleotides to the ends of RNA molecules by using nucleoside diphosphates as substrates, but this may not be physiologically important. Probably plays a role in initiation of 16S rRNA degradation (leading to ribosome degradation) during starvation. In Mycolicibacterium smegmatis (strain ATCC 700084 / mc(2)155) (Mycobacterium smegmatis), this protein is Ribonuclease PH.